The following is a 349-amino-acid chain: Ferredoxin--NADP reductase 1 (349 aa).

FAD is bound by residues Glu36, Lys44, Tyr48, Ile88, Leu123, Asp290, and Ser331.

The protein belongs to the ferredoxin--NADP reductase type 2 family. Homodimer. Requires FAD as cofactor.

The catalysed reaction is 2 reduced [2Fe-2S]-[ferredoxin] + NADP(+) + H(+) = 2 oxidized [2Fe-2S]-[ferredoxin] + NADPH. The polypeptide is Ferredoxin--NADP reductase 1 (Bacillus thuringiensis (strain Al Hakam)).